Consider the following 249-residue polypeptide: Pleckstrin homology domain-containing family F member 2 (249 aa).

Ser16 is modified (phosphoserine). In terms of domain architecture, PH spans 35–131 (VLIGEGVLTK…WMNHINKCVT (97 aa)). N6-acetyllysine is present on Lys44. The segment at 152–212 (DSEATVCMRC…ICDFCYDLLS (61 aa)) adopts an FYVE-type zinc-finger fold. Positions 158, 161, 175, 178, 183, 186, 204, and 207 each coordinate Zn(2+). Residues 221-233 (PTRSDSYSQSLKS) show a composition bias toward polar residues. The tract at residues 221–249 (PTRSDSYSQSLKSPLNDASDDDDDDDSSD) is disordered. Residues 238–249 (ASDDDDDDDSSD) show a composition bias toward acidic residues. Ser239 and Ser248 each carry phosphoserine.

May interact with EEA1. As to expression, expressed in brain, stomach and thymus, as well as in kidney, spleen, and skeletal muscle. Also expressed in peripheral blood mononuclear cells and dendritic cells.

It localises to the early endosome membrane. The protein localises to the endoplasmic reticulum. In terms of biological role, may play a role in early endosome fusion upstream of RAB5, hence regulating receptor trafficking and fluid-phase transport. Enhances cellular sensitivity to TNF-induced apoptosis. The polypeptide is Pleckstrin homology domain-containing family F member 2 (Plekhf2) (Mus musculus (Mouse)).